We begin with the raw amino-acid sequence, 170 residues long: RxLR effector protein PITG_07555 (170 aa).

The first 17 residues, 1–17 (MQAYHLLLVCMYISCSA), serve as a signal peptide directing secretion. The RxLR-dEER motif lies at 50 to 62 (RALRTHNPDREER).

This sequence belongs to the RxLR effector family.

It localises to the secreted. The protein localises to the host cytoplasm. Its subcellular location is the host nucleus. Its function is as follows. Effector that enhances P.infestans colonization of Nicotiana benthamiana leaves. In Phytophthora infestans (strain T30-4) (Potato late blight agent), this protein is RxLR effector protein PITG_07555.